The sequence spans 284 residues: uncharacterized protein (284 aa).

Polar residues predominate over residues 1-27; it reads MSNLPTSTPVSPSNLAEENPKSNNPES. Disordered regions lie at residues 1–29 and 248–284; these read MSNLPTSTPVSPSNLAEENPKSNNPESSE and TRDSKRQQKKGKTTTVARSTNKKNKSMMGTVKDLKKK.

This is an uncharacterized protein from Caenorhabditis elegans.